Reading from the N-terminus, the 203-residue chain is Inactive ribonuclease-like protein 9 (203 aa).

An N-terminal signal peptide occupies residues Met-1–Leu-25. 3 cysteine pairs are disulfide-bonded: Cys-96–Cys-151, Cys-114–Cys-166, and Cys-121–Cys-128. N-linked (GlcNAc...) asparagine glycans are attached at residues Asn-129 and Asn-141.

This sequence belongs to the pancreatic ribonuclease family.

Its subcellular location is the secreted. Functionally, does not exhibit any ribonuclease activity. This is Inactive ribonuclease-like protein 9 (RNASE9) from Macaca assamensis (Assam macaque).